Consider the following 536-residue polypeptide: L-ornithine N(5)-monooxygenase SIDA (536 aa).

Residues 1–25 (MSPHRETTGDESTTTTVPQNGTNGA) form a disordered region. FAD contacts are provided by residues 115–123 (EKQTRFAWH) and glutamine 134. Lysine 139 contributes to the L-ornithine binding site. Valine 200 provides a ligand contact to FAD. Arginine 310 contributes to the NADP(+) binding site. L-ornithine contacts are provided by residues 324–327 (NSIF) and asparagine 354. FAD is bound at residue 515-517 (TLL). Serine 518 lines the L-ornithine pocket.

It belongs to the lysine N(6)-hydroxylase/L-ornithine N(5)-oxygenase family. In terms of assembly, homotetramer. The cofactor is FAD.

The enzyme catalyses L-ornithine + NADH + O2 = N(5)-hydroxy-L-ornithine + NAD(+) + H2O. It carries out the reaction L-ornithine + NADPH + O2 = N(5)-hydroxy-L-ornithine + NADP(+) + H2O. It participates in siderophore biosynthesis. In terms of biological role, L-ornithine N(5)-monooxygenase; part of the gene cluster that mediates the biosynthesis of at least 11 siderophores, including beauverichelin A, dimerumic acid (DA), Na-dimethyl coprogen (NADC), eleutherazine B, ferricrocin (FC), fusarinine A, fusarinine C (FsC), metachelin A, mevalonolactone, rhodotorulic acid (RA) and tenellin. This cocktail of siderophores for iron metabolism is essential for virulence, and more specifically for the fungal virulence in penetrating through the host cuticle. Siderophore synthesis is also involved in conidial germination under iron-deficient conditions. SIDA initiates the biosynthesis of these siderophores with the enzymatic hydroxylation of ornithine. SIDA is indispensable for the production of most siderophores including fusarinine C and ferricrocin but not mevalonolactone and eleutherazine B. However, SIDA mediates the metabolic interplay between synthesis of mevalonolactone and eleutherazine B and other siderophores. This chain is L-ornithine N(5)-monooxygenase SIDA, found in Beauveria bassiana (strain ARSEF 2860) (White muscardine disease fungus).